A 295-amino-acid chain; its full sequence is Glutamyl-Q tRNA(Asp) synthetase (295 aa).

Residues 5–9 and Glu41 each bind L-glutamate; that span reads RFAPS. The short motif at 8 to 18 is the 'HIGH' region element; it reads PSPTGLLHIGS. Zn(2+) is bound by residues Cys97, Cys99, Tyr117, and Cys121. Positions 178 and 196 each coordinate L-glutamate. The short motif at 234 to 238 is the 'KMSKS' region element; the sequence is KWSKQ. An ATP-binding site is contributed by Lys237.

Belongs to the class-I aminoacyl-tRNA synthetase family. GluQ subfamily. It depends on Zn(2+) as a cofactor.

Its function is as follows. Catalyzes the tRNA-independent activation of glutamate in presence of ATP and the subsequent transfer of glutamate onto a tRNA(Asp). Glutamate is transferred on the 2-amino-5-(4,5-dihydroxy-2-cyclopenten-1-yl) moiety of the queuosine in the wobble position of the QUC anticodon. The sequence is that of Glutamyl-Q tRNA(Asp) synthetase from Neisseria meningitidis serogroup A / serotype 4A (strain DSM 15465 / Z2491).